The primary structure comprises 466 residues: 3-isopropylmalate dehydratase large subunit (466 aa).

[4Fe-4S] cluster-binding residues include Cys347, Cys407, and Cys410.

It belongs to the aconitase/IPM isomerase family. LeuC type 1 subfamily. In terms of assembly, heterodimer of LeuC and LeuD. The cofactor is [4Fe-4S] cluster.

It carries out the reaction (2R,3S)-3-isopropylmalate = (2S)-2-isopropylmalate. It functions in the pathway amino-acid biosynthesis; L-leucine biosynthesis; L-leucine from 3-methyl-2-oxobutanoate: step 2/4. Functionally, catalyzes the isomerization between 2-isopropylmalate and 3-isopropylmalate, via the formation of 2-isopropylmaleate. The sequence is that of 3-isopropylmalate dehydratase large subunit from Acidiphilium cryptum (strain JF-5).